Reading from the N-terminus, the 386-residue chain is Mannitol-1-phosphate 5-dehydrogenase (386 aa).

Residue 3-14 coordinates NAD(+); the sequence is AVHFGAGNIGRG.

It belongs to the mannitol dehydrogenase family.

The catalysed reaction is D-mannitol 1-phosphate + NAD(+) = beta-D-fructose 6-phosphate + NADH + H(+). In Brevibacillus brevis (strain 47 / JCM 6285 / NBRC 100599), this protein is Mannitol-1-phosphate 5-dehydrogenase.